The following is an 837-amino-acid chain: Protein translocase subunit SecA (837 aa).

ATP contacts are provided by residues Gln83, 101–105 (GEGKT), and Asp494.

It belongs to the SecA family. As to quaternary structure, monomer and homodimer. Part of the essential Sec protein translocation apparatus which comprises SecA, SecYEG and auxiliary proteins SecDF. Other proteins may also be involved.

Its subcellular location is the cell membrane. The protein localises to the cytoplasm. The enzyme catalyses ATP + H2O + cellular proteinSide 1 = ADP + phosphate + cellular proteinSide 2.. Part of the Sec protein translocase complex. Interacts with the SecYEG preprotein conducting channel. Has a central role in coupling the hydrolysis of ATP to the transfer of proteins into and across the cell membrane, serving as an ATP-driven molecular motor driving the stepwise translocation of polypeptide chains across the membrane. This Ureaplasma parvum serovar 3 (strain ATCC 27815 / 27 / NCTC 11736) protein is Protein translocase subunit SecA.